A 901-amino-acid polypeptide reads, in one-letter code: HTH-type transcriptional regulator MalT (901 aa).

39–46 (SPAGYGKT) contacts ATP. Residues 829 to 894 (ELIRTSPLTQ…AAVQHAQKLL (66 aa)) form the HTH luxR-type domain. The segment at residues 853–872 (NEQIAGELEVAATTIKTHIR) is a DNA-binding region (H-T-H motif).

It belongs to the MalT family. In terms of assembly, monomer in solution. Oligomerizes to an active state in the presence of the positive effectors ATP and maltotriose.

Its activity is regulated as follows. Activated by ATP and maltotriose, which are both required for DNA binding. Its function is as follows. Positively regulates the transcription of the maltose regulon whose gene products are responsible for uptake and catabolism of malto-oligosaccharides. Specifically binds to the promoter region of its target genes, recognizing a short DNA motif called the MalT box. This chain is HTH-type transcriptional regulator MalT, found in Escherichia coli O127:H6 (strain E2348/69 / EPEC).